Consider the following 335-residue polypeptide: DNA-directed RNA polymerases I and III subunit RPAC1 (335 aa).

Serine 2 carries the N-acetylserine modification. Residue serine 17 is modified to Phosphoserine.

It belongs to the archaeal Rpo3/eukaryotic RPB3 RNA polymerase subunit family. As to quaternary structure, component of the RNA polymerase I (Pol I) complex consisting of 14 subunits: RPA135, RPA190, RPC40, RPA14, RPB5, RPO26, RPA43, RPB8, RPA12, RPB10, RPC19, RPC10, RPA49 and RPA34. The complex is composed of a horseshoe-shaped core containing ten subunits (RPA135, RPA190, RPB5, RPO26, RPB8, RPB10, RPC10, RPA12, RPC19 and RPC40) where RPA135 and RPA190 form the DNA-binding cleft. Outside of the core, RPA14 and RPA43 form the stalk that mediates interactions with transcription initiation factors and newly synthesized RNA. Component of the RNA polymerase III (Pol III) complex consisting of at least 17 subunits. Interacts with the RPC19/RPAC2 and RPC53/RPC4. Interacts with retrotransposons Ty integrase, targeting Ty1, Ty2 and Ty4 integration upstream of pol III-transcribed genes.

The protein localises to the nucleus. Its subcellular location is the nucleolus. Its function is as follows. DNA-dependent RNA polymerases catalyze the transcription of DNA into RNA using the four ribonucleoside triphosphates as substrates. Common component of RNA polymerases I (Pol I) and III (Pol III) which synthesize ribosomal RNA precursors and small RNAs, such as 5S rRNA and tRNAs, respectively. RPC40 is part of the polymerase core and may function as a clamp element that moves to open and close the cleft. Plays an important role in targeting retrotransposons Ty integration upstream of pol III-transcribed genes such as tRNA genes, allowing Ty1, Ty2 and Ty4 to proliferate and yet minimizing genetic damage. This is DNA-directed RNA polymerases I and III subunit RPAC1 from Saccharomyces cerevisiae (strain ATCC 204508 / S288c) (Baker's yeast).